We begin with the raw amino-acid sequence, 189 residues long: NADH-quinone oxidoreductase subunit B (189 aa).

4 residues coordinate [4Fe-4S] cluster: Cys39, Cys40, Cys104, and Cys135.

The protein belongs to the complex I 20 kDa subunit family. NDH-1 is composed of 14 different subunits. Subunits NuoB, C, D, E, F, and G constitute the peripheral sector of the complex. It depends on [4Fe-4S] cluster as a cofactor.

The protein resides in the cell inner membrane. It carries out the reaction a quinone + NADH + 5 H(+)(in) = a quinol + NAD(+) + 4 H(+)(out). NDH-1 shuttles electrons from NADH, via FMN and iron-sulfur (Fe-S) centers, to quinones in the respiratory chain. The immediate electron acceptor for the enzyme in this species is believed to be a menaquinone. Couples the redox reaction to proton translocation (for every two electrons transferred, four hydrogen ions are translocated across the cytoplasmic membrane), and thus conserves the redox energy in a proton gradient. The polypeptide is NADH-quinone oxidoreductase subunit B (Chlorobaculum parvum (strain DSM 263 / NCIMB 8327) (Chlorobium vibrioforme subsp. thiosulfatophilum)).